Reading from the N-terminus, the 386-residue chain is V-type proton ATPase subunit B 2 (386 aa).

The protein belongs to the ATPase alpha/beta chains family. As to quaternary structure, V-ATPase is a heteromultimeric enzyme composed of a peripheral catalytic V1 complex (main components: subunits A, B, C, D, E, and F) attached to an integral membrane V0 proton pore complex (main component: the proteolipid protein).

Functionally, non-catalytic subunit of the peripheral V1 complex of vacuolar ATPase. V-ATPase is responsible for acidifying a variety of intracellular compartments in eukaryotic cells. This is V-type proton ATPase subunit B 2 from Gossypium hirsutum (Upland cotton).